The primary structure comprises 333 residues: Cell division protein FtsQ (333 aa).

Positions 1-99 are disordered; the sequence is MTGTGPHGDP…ARREAKRRAV (99 aa). Over 1-118 the chain is Cytoplasmic; it reads MTGTGPHGDP…VPRNTIRGLK (118 aa). Residues 11-22 are compositionally biased toward acidic residues; the sequence is AEDPAGPDDTAA. A compositionally biased stretch (low complexity) spans 44–57; the sequence is TTETTAQTGTTAEA. The span at 73–92 shows a compositional bias: basic and acidic residues; the sequence is ERAERRAARDRAMAIEQARR. Residues 119–139 traverse the membrane as a helical segment; sequence VLMWAALVSVLAVALGLLLYF. The Extracellular segment spans residues 140-333; the sequence is TPIMSARNVE…VSSPDLPTVK (194 aa). Positions 143 to 211 constitute a POTRA domain; that stretch reads MSARNVEVSG…STLKISIVER (69 aa).

It belongs to the FtsQ/DivIB family. FtsQ subfamily.

Its subcellular location is the cell membrane. Functionally, essential cell division protein. The polypeptide is Cell division protein FtsQ (Mycolicibacterium smegmatis (strain ATCC 700084 / mc(2)155) (Mycobacterium smegmatis)).